The following is a 108-amino-acid chain: uncharacterized protein (108 aa).

This is an uncharacterized protein from Microplitis demolitor bracovirus (isolate Webb) (MdBV).